The primary structure comprises 183 residues: Negative modulator of initiation of replication (183 aa).

The interval 118–122 (RTRIY) is interaction with DNA.

It belongs to the SeqA family. As to quaternary structure, homodimer. Polymerizes to form helical filaments.

Its subcellular location is the cytoplasm. Its function is as follows. Negative regulator of replication initiation, which contributes to regulation of DNA replication and ensures that replication initiation occurs exactly once per chromosome per cell cycle. Binds to pairs of hemimethylated GATC sequences in the oriC region, thus preventing assembly of replication proteins and re-initiation at newly replicated origins. Repression is relieved when the region becomes fully methylated. The chain is Negative modulator of initiation of replication from Proteus mirabilis (strain HI4320).